Reading from the N-terminus, the 353-residue chain is Photosystem II protein D1 (353 aa).

N-acetylthreonine is present on threonine 2. Residue threonine 2 is modified to Phosphothreonine. 3 consecutive transmembrane segments (helical) span residues 29–46 (YIGWFGVIMIPTLLTATS), 118–133 (HFFLGICCYMGREWEL), and 142–156 (WIAVAYSAPVAAATA). Chlorophyll a is bound at residue histidine 118. Tyrosine 126 serves as a coordination point for pheophytin a. [CaMn4O5] cluster contacts are provided by aspartate 170 and glutamate 189. The helical transmembrane segment at 197 to 218 (FHMLGVAGVFGGSLFSAMHGSL) threads the bilayer. Chlorophyll a is bound at residue histidine 198. A quinone contacts are provided by residues histidine 215 and 264–265 (SF). Histidine 215 is a binding site for Fe cation. Histidine 272 contributes to the Fe cation binding site. Residues 274-288 (FLAAWPVVGIWFTAL) traverse the membrane as a helical segment. [CaMn4O5] cluster is bound by residues histidine 332, glutamate 333, aspartate 342, and alanine 344. A propeptide spanning residues 345 to 353 (SVEAPSVNA) is cleaved from the precursor.

This sequence belongs to the reaction center PufL/M/PsbA/D family. PSII is composed of 1 copy each of membrane proteins PsbA, PsbB, PsbC, PsbD, PsbE, PsbF, PsbH, PsbI, PsbJ, PsbK, PsbL, PsbM, PsbT, PsbX, PsbY, PsbZ, Psb30/Ycf12, at least 3 peripheral proteins of the oxygen-evolving complex and a large number of cofactors. It forms dimeric complexes. The D1/D2 heterodimer binds P680, chlorophylls that are the primary electron donor of PSII, and subsequent electron acceptors. It shares a non-heme iron and each subunit binds pheophytin, quinone, additional chlorophylls, carotenoids and lipids. D1 provides most of the ligands for the Mn4-Ca-O5 cluster of the oxygen-evolving complex (OEC). There is also a Cl(-1) ion associated with D1 and D2, which is required for oxygen evolution. The PSII complex binds additional chlorophylls, carotenoids and specific lipids. serves as cofactor. Post-translationally, the 9 C-terminal residues are removed, probably by CTPA (AC O04073); processing is essential to allow assembly of the oxygen-evolving complex and thus photosynthetic growth. In terms of processing, tyr-161 forms a radical intermediate that is referred to as redox-active TyrZ, YZ or Y-Z.

Its subcellular location is the plastid. The protein resides in the chloroplast thylakoid membrane. It carries out the reaction 2 a plastoquinone + 4 hnu + 2 H2O = 2 a plastoquinol + O2. Functionally, photosystem II (PSII) is a light-driven water:plastoquinone oxidoreductase that uses light energy to abstract electrons from H(2)O, generating O(2) and a proton gradient subsequently used for ATP formation. It consists of a core antenna complex that captures photons, and an electron transfer chain that converts photonic excitation into a charge separation. The D1/D2 (PsbA/PsbD) reaction center heterodimer binds P680, the primary electron donor of PSII as well as several subsequent electron acceptors. The sequence is that of Photosystem II protein D1 from Tetradesmus obliquus (Green alga).